Here is a 390-residue protein sequence, read N- to C-terminus: Alpha-2B adrenergic receptor (390 aa).

Residues 1 to 25 (AIATVITFLILFTIFGNSLVILAVL) traverse the membrane as a helical segment. The Cytoplasmic portion of the chain corresponds to 26-36 (TSRSLRAPQNL). A helical membrane pass occupies residues 37–62 (FLVSLAAADIMVATLIIPFSLANELL). Topologically, residues 63 to 72 (GYWYFRRTWC) are extracellular. The cysteines at positions 72 and 151 are disulfide-linked. Residues 73 to 95 (EVYLALDVLFCTSSIVHLCAISL) traverse the membrane as a helical segment. At 96-117 (DRYWAVSRALEYNSKRTPRRIK) the chain is on the cytoplasmic side. A helical membrane pass occupies residues 118-140 (CIILTVWLIAAAISLPPLIYKGD). Over 141–156 (QGPQPRGRPQCKLNQE) the chain is Extracellular. A helical transmembrane segment spans residues 157-180 (AWYILSSSIGSFFAPCLIMILVYL). The Cytoplasmic portion of the chain corresponds to 181-354 (RIYLIAKRSH…LTREKRFTFV (174 aa)). 2 disordered regions span residues 191 to 218 (RRGP…PSAL) and 233 to 311 (EANG…PLQQ). The span at 280–292 (LEEEADKEEEEEC) shows a compositional bias: acidic residues. Residues 355 to 378 (LAVVIGVFVLCWFPFFFSYSLGAI) form a helical membrane-spanning segment. Over 379–390 (CPQHCKVPHGLF) the chain is Extracellular.

Belongs to the G-protein coupled receptor 1 family. Adrenergic receptor subfamily. ADRA2B sub-subfamily. Interacts with RAB26. Interacts with PPP1R9B. Interacts with GGA1, GGA2 and GGA3.

The protein localises to the cell membrane. Alpha-2 adrenergic receptors mediate the catecholamine-induced inhibition of adenylate cyclase through the action of G proteins. The sequence is that of Alpha-2B adrenergic receptor (ADRA2B) from Dugong dugon (Dugong).